The primary structure comprises 155 residues: Ribosomal RNA large subunit methyltransferase H (155 aa).

Residues Leu72, Gly103, and 122–127 each bind S-adenosyl-L-methionine; that span reads LSDLTL.

Belongs to the RNA methyltransferase RlmH family. In terms of assembly, homodimer.

It is found in the cytoplasm. The catalysed reaction is pseudouridine(1915) in 23S rRNA + S-adenosyl-L-methionine = N(3)-methylpseudouridine(1915) in 23S rRNA + S-adenosyl-L-homocysteine + H(+). In terms of biological role, specifically methylates the pseudouridine at position 1915 (m3Psi1915) in 23S rRNA. The protein is Ribosomal RNA large subunit methyltransferase H of Paracidovorax citrulli (strain AAC00-1) (Acidovorax citrulli).